Here is a 665-residue protein sequence, read N- to C-terminus: E3 ubiquitin-protein ligase cblA (665 aa).

The tract at residues 30–50 is disordered; that stretch reads NNNNNINNNNNNNNINSNNNG. The tract at residues 109-231 is 4H; the sequence is TSLVNYIHYE…NNENNNNNNN (123 aa). A Cbl-PTB domain is found at 109-400; that stretch reads TSLVNYIHYE…PDIFKSILSF (292 aa). The EF-hand-like stretch occupies residues 232–306; sequence NYNPYELLSN…FKLSVFIKWF (75 aa). 4 residues coordinate Ca(2+): Asp287, Thr289, Asp291, and Tyr293. Residues 307–400 are SH2-like; sequence GALPVSLGIF…PDIFKSILSF (94 aa). 2 disordered regions span residues 437-456 and 467-609; these read ENNN…INTF and DSSN…NNNN. Over residues 467–478 the composition is skewed to low complexity; the sequence is DSSNSSDTNKSP. The stretch at 479-544 forms a coiled coil; the sequence is TKSRKSSFKN…NNNNNNNNNN (66 aa). The segment covering 486–512 has biased composition (basic and acidic residues); sequence FKNDKDKKEKEKEKGKDKEKEKERVSD. Composition is skewed to low complexity over residues 530–561 and 571–609; these read NNNN…NNNN and TSNG…NNNN. The RING-type zinc finger occupies 618 to 653; sequence CTVCMDNEINTVFLECGHLSCCSLCSVKLKKCPICR.

Ubiquitinated.

The protein resides in the cytoplasm. It is found in the nucleus. It carries out the reaction S-ubiquitinyl-[E2 ubiquitin-conjugating enzyme]-L-cysteine + [acceptor protein]-L-lysine = [E2 ubiquitin-conjugating enzyme]-L-cysteine + N(6)-ubiquitinyl-[acceptor protein]-L-lysine.. Its pathway is protein modification; protein ubiquitination. Functionally, acts as an E3 ubiquitin-protein ligase, which accepts ubiquitin from specific E2 ubiquitin-conjugating enzymes, and then transfers it to substrates promoting their degradation by the proteasome. Up-regulates STATc tyrosine phosphorylation via an inhibitory effect on ptpC accumulation. Recognizes activated receptor tyrosine kinases, RTKs and terminates signaling. The sequence is that of E3 ubiquitin-protein ligase cblA (cblA-1) from Dictyostelium discoideum (Social amoeba).